Reading from the N-terminus, the 365-residue chain is MQALLPIEQYDSLLAEKQKKLTALLAPFHAPALAVFPSPVQHYRMRAEFRIWHDKGDFYHIMFDQRTRQRYRVDCFPMASQLINQMMDTLLPLLKTNRVLHHKLFQIDYLSTLSNKIIVSLLYHKTLDEEWEQAAKQLKASLLQQGFDLQLIGRASKQKICLEQEFVDEVLTVHGKSYVYRQVENSFTQPNAIVNQKMLEWAVDCTQNSEGDLLELYCGNGNFSIALAQNFRKVLATEIAKPSVAAAQFNIAENSIKNLQIIRMSAEEFTQAMNGVREFHRLKGIDLNAYECNTIFVDPPRAGLDEETVKLVQNYDRILYISCNPHTLCDNLQHLCQTHRIEKAALFDQFPYTEHMEAGVWLIRK.

S-adenosyl-L-methionine-binding residues include glutamine 189, tyrosine 217, asparagine 222, glutamate 238, and aspartate 298. The active-site Nucleophile is the cysteine 323. The active-site Proton acceptor is glutamate 357.

This sequence belongs to the class I-like SAM-binding methyltransferase superfamily. RNA M5U methyltransferase family. TrmA subfamily.

It catalyses the reaction uridine(54) in tRNA + S-adenosyl-L-methionine = 5-methyluridine(54) in tRNA + S-adenosyl-L-homocysteine + H(+). The enzyme catalyses uridine(341) in tmRNA + S-adenosyl-L-methionine = 5-methyluridine(341) in tmRNA + S-adenosyl-L-homocysteine + H(+). In terms of biological role, dual-specificity methyltransferase that catalyzes the formation of 5-methyluridine at position 54 (m5U54) in all tRNAs, and that of position 341 (m5U341) in tmRNA (transfer-mRNA). This Pasteurella multocida (strain Pm70) protein is tRNA/tmRNA (uracil-C(5))-methyltransferase.